Consider the following 81-residue polypeptide: Gamma-conotoxin-like TeA53 (81 aa).

The signal sequence occupies residues 1-19 (MQKLTILLLVAAVLMSTQA). A propeptide spanning residues 20–42 (LNQEQHQRAKINLLSKRKPPAER) is cleaved from the precursor. Intrachain disulfides connect Cys49–Cys63, Cys56–Cys67, and Cys62–Cys72.

The protein belongs to the conotoxin O2 superfamily. As to expression, expressed by the venom duct.

Its subcellular location is the secreted. In terms of biological role, gamma-conotoxins may act on voltage-gated non-specific cation pacemaker channels (HCN). The chain is Gamma-conotoxin-like TeA53 from Conus textile (Cloth-of-gold cone).